The sequence spans 326 residues: Eukaryotic translation initiation factor 3 subunit I (326 aa).

WD repeat units lie at residues 8–47 (GHER…RLGT), 50–89 (GHQG…VIAS), 145–184 (MTES…KVVD), 188–227 (DHSA…CLKT), and 285–326 (GHFG…NIFE).

It belongs to the eIF-3 subunit I family. As to quaternary structure, component of the eukaryotic translation initiation factor 3 (eIF-3) complex. The eIF-3 complex interacts with pix.

It localises to the cytoplasm. Its function is as follows. Component of the eukaryotic translation initiation factor 3 (eIF-3) complex, which is involved in protein synthesis of a specialized repertoire of mRNAs and, together with other initiation factors, stimulates binding of mRNA and methionyl-tRNAi to the 40S ribosome. The eIF-3 complex specifically targets and initiates translation of a subset of mRNAs involved in cell proliferation. This chain is Eukaryotic translation initiation factor 3 subunit I, found in Drosophila erecta (Fruit fly).